A 96-amino-acid chain; its full sequence is Protein RnfH (96 aa).

It belongs to the UPF0125 (RnfH) family.

In Escherichia coli O139:H28 (strain E24377A / ETEC), this protein is Protein RnfH.